The chain runs to 768 residues: Pentatricopeptide repeat-containing protein At3g53360, mitochondrial (768 aa).

The N-terminal 70 residues, methionine 1–tyrosine 70, are a transit peptide targeting the mitochondrion. PPR repeat units follow at residues threonine 30 to asparagine 60, arginine 66 to tyrosine 100, aspartate 101 to arginine 131, asparagine 132 to proline 166, aspartate 167 to serine 201, histidine 202 to lysine 232, aspartate 233 to histidine 267, asparagine 269 to glycine 303, asparagine 304 to proline 334, aspartate 335 to proline 369, aspartate 370 to alanine 404, aspartate 405 to asparagine 435, aspartate 437 to proline 471, aspartate 472 to proline 506, glutamate 507 to arginine 537, aspartate 538 to proline 572, asparagine 573 to proline 608, and threonine 609 to glutamate 639. The interval valine 644 to glutamate 719 is type E motif. A type E(+) motif region spans residues aspartate 720 to leucine 750.

Belongs to the PPR family. PCMP-E subfamily.

It localises to the mitochondrion. This chain is Pentatricopeptide repeat-containing protein At3g53360, mitochondrial (PCMP-E86), found in Arabidopsis thaliana (Mouse-ear cress).